Consider the following 151-residue polypeptide: Arginine repressor (151 aa).

Belongs to the ArgR family.

It is found in the cytoplasm. It participates in amino-acid biosynthesis; L-arginine biosynthesis [regulation]. Regulates arginine biosynthesis genes. This chain is Arginine repressor, found in Pelotomaculum thermopropionicum (strain DSM 13744 / JCM 10971 / SI).